The chain runs to 276 residues: Undecaprenyl-diphosphatase 2 (276 aa).

A run of 8 helical transmembrane segments spans residues 1 to 21 (MSLW…LFPV), 44 to 64 (QLLP…LWYF), 87 to 107 (GHLM…GLLL), 114 to 134 (VFHD…LLWV), 150 to 170 (MTFK…IPGF), 190 to 210 (AAEF…VLEL), 220 to 240 (LMDA…SVRF), and 251 to 271 (LASF…WFML).

It belongs to the UppP family.

It is found in the cell inner membrane. It catalyses the reaction di-trans,octa-cis-undecaprenyl diphosphate + H2O = di-trans,octa-cis-undecaprenyl phosphate + phosphate + H(+). Its function is as follows. Catalyzes the dephosphorylation of undecaprenyl diphosphate (UPP). Confers resistance to bacitracin. The polypeptide is Undecaprenyl-diphosphatase 2 (Burkholderia ambifaria (strain ATCC BAA-244 / DSM 16087 / CCUG 44356 / LMG 19182 / AMMD) (Burkholderia cepacia (strain AMMD))).